An 88-amino-acid polypeptide reads, in one-letter code: Kunitz-type U15-theraphotoxin-Hs1f (88 aa).

An N-terminal signal peptide occupies residues 1-27; the sequence is MGTARFLSAVLLLSVLLMVTFPALLSA. Positions 28-33 are excised as a propeptide; that stretch reads EYHDGR. The 49-residue stretch at 37-85 folds into the BPTI/Kunitz inhibitor domain; sequence CSLPSDSGDCLRLFEMWYFDGTTCTKFVYGGYGGNDNRFPTEKACMKRC. 2 cysteine pairs are disulfide-bonded: cysteine 37/cysteine 85 and cysteine 60/cysteine 81.

Belongs to the venom Kunitz-type family. 03 (sub-Kunitz) subfamily. Expressed by the venom gland.

The protein localises to the secreted. Functionally, serine protease inhibitor that inhibits trypsin at a molar ratio of 1:1. The protein is Kunitz-type U15-theraphotoxin-Hs1f of Cyriopagopus schmidti (Chinese bird spider).